A 70-amino-acid polypeptide reads, in one-letter code: DNA-directed RNA polymerase subunit omega (70 aa).

Belongs to the RNA polymerase subunit omega family. The RNAP catalytic core consists of 2 alpha, 1 beta, 1 beta' and 1 omega subunit. When a sigma factor is associated with the core the holoenzyme is formed, which can initiate transcription.

It carries out the reaction RNA(n) + a ribonucleoside 5'-triphosphate = RNA(n+1) + diphosphate. Promotes RNA polymerase assembly. Latches the N- and C-terminal regions of the beta' subunit thereby facilitating its interaction with the beta and alpha subunits. The polypeptide is DNA-directed RNA polymerase subunit omega (Staphylococcus saprophyticus subsp. saprophyticus (strain ATCC 15305 / DSM 20229 / NCIMB 8711 / NCTC 7292 / S-41)).